Here is a 63-residue protein sequence, read N- to C-terminus: Large ribosomal subunit protein uL29 (63 aa).

The protein belongs to the universal ribosomal protein uL29 family.

This is Large ribosomal subunit protein uL29 from Shewanella oneidensis (strain ATCC 700550 / JCM 31522 / CIP 106686 / LMG 19005 / NCIMB 14063 / MR-1).